Reading from the N-terminus, the 544-residue chain is Probable protein kinase UbiB (544 aa).

The 379-residue stretch at 123–501 (DFDLVPLASA…KRQQATGKFL (379 aa)) folds into the Protein kinase domain. ATP-binding positions include 129–137 (LASASIAQV) and Lys-152. Catalysis depends on Asp-287, which acts as the Proton acceptor. Transmembrane regions (helical) follow at residues 496-516 (ATGK…AILV) and 519-539 (TYEQ…LFSW).

This sequence belongs to the ABC1 family. UbiB subfamily.

The protein localises to the cell inner membrane. It participates in cofactor biosynthesis; ubiquinone biosynthesis [regulation]. Its function is as follows. Is probably a protein kinase regulator of UbiI activity which is involved in aerobic coenzyme Q (ubiquinone) biosynthesis. This chain is Probable protein kinase UbiB, found in Vibrio vulnificus (strain YJ016).